The sequence spans 745 residues: MAQTINLQLEGMRCAACASSIERAIAKVPGVQSCQVNFALEQAVVSYHGETTPQILTDAVERAGYHARVLKQQVLSSQQTEDRKPVFSAKLVTGLVISAVLFFGSLPMMLGVNIPHFPHIFHDPWLQWLLATPVQFWSGAEFYRGAWKSVRTRSATMDTLVALGTSAAYFYSVAITLFPQWLTSQGLAAHVYFEAAAVVITLILLGRSLEQRARRETSAAIRKLMGLQPQTALVKRGEHWETVAIAELAINDVVRVRPGEKIPVDGVVVAGNSTVDESLVTGESFPVDKTVGTEVIGATLNKSGSLDIQVSKLGQDSVLAQIIQLVQQAQASKAPIQHFVDRITHWFVPTVIVVAIAAFCIWWLTTGNITLAVLTLVEVLIIACPCALGLATPTSVMVGTGKGAEYGVLIKEASSLEMAEKLTAIVLDKTGTLTQGKPSVTNFFTLSPTSTEESLQLIQWAASVEQYSEHPLAEAVVNYGQSQQVSLLEIDNFQAIAGCGVAGQWQGQWIRLGTSNWLTDLGVTGTEHQPWQSQAQQWEKEQKTVIWLAVDTEVKALLAIADAIKPSSPQVVQALKKLGLSVYMLTGDNQATAQAIADTVGIRHVLAQVRPGDKAQQVEQLQQKGNIVAMVGDGINDAPALAQADVGIAIGTGTDVAIAASDITLIAGDLQGILTAIKLSRATMGNIRQNLFFAFIYNVIGIPVAAGLFYPLFGLLLNPILAGAAMAFSSVSVVTNALRLKKFCP.

Residues 1-94 (MAQTINLQLE…PVFSAKLVTG (94 aa)) lie on the Cytoplasmic side of the membrane. The HMA domain maps to 3-68 (QTINLQLEGM…AVERAGYHAR (66 aa)). A metal cation contacts are provided by C14 and C17. Residues 95–115 (LVISAVLFFGSLPMMLGVNIP) traverse the membrane as a helical segment. At 116–125 (HFPHIFHDPW) the chain is on the extracellular side. The helical transmembrane segment at 126–145 (LQWLLATPVQFWSGAEFYRG) threads the bilayer. The Cytoplasmic segment spans residues 146 to 152 (AWKSVRT). Residues 153–173 (RSATMDTLVALGTSAAYFYSV) traverse the membrane as a helical segment. Topologically, residues 174–193 (AITLFPQWLTSQGLAAHVYF) are extracellular. Residues 194-214 (EAAAVVITLILLGRSLEQRAR) traverse the membrane as a helical segment. At 215 to 342 (RETSAAIRKL…KAPIQHFVDR (128 aa)) the chain is on the cytoplasmic side. The chain crosses the membrane as a helical span at residues 343–365 (ITHWFVPTVIVVAIAAFCIWWLT). The Extracellular portion of the chain corresponds to 366–372 (TGNITLA). Residues 373–390 (VLTLVEVLIIACPCALGL) traverse the membrane as a helical segment. Over 391–543 (ATPTSVMVGT…QAQQWEKEQK (153 aa)) the chain is Cytoplasmic. Residue D428 is the 4-aspartylphosphate intermediate of the active site. The chain crosses the membrane as a helical span at residues 544–564 (TVIWLAVDTEVKALLAIADAI). The Extracellular segment spans residues 565 to 687 (KPSSPQVVQA…KLSRATMGNI (123 aa)). Residues D633 and D637 each coordinate Mg(2+). Residues 688–707 (RQNLFFAFIYNVIGIPVAAG) traverse the membrane as a helical segment. Topologically, residues 708-719 (LFYPLFGLLLNP) are cytoplasmic. Residues 720–738 (ILAGAAMAFSSVSVVTNAL) traverse the membrane as a helical segment. At 739–745 (RLKKFCP) the chain is on the extracellular side.

It belongs to the cation transport ATPase (P-type) (TC 3.A.3) family. Type IB subfamily.

The protein localises to the cell membrane. The catalysed reaction is Cu(+)(in) + ATP + H2O = Cu(+)(out) + ADP + phosphate + H(+). May play a role in the osmotic adaptation. The protein is Probable copper-transporting ATPase PacS (pacS) of Synechocystis sp. (strain ATCC 27184 / PCC 6803 / Kazusa).